A 52-amino-acid polypeptide reads, in one-letter code: Large ribosomal subunit protein bL32c (52 aa).

This sequence belongs to the bacterial ribosomal protein bL32 family.

The protein localises to the plastid. It is found in the chloroplast. The sequence is that of Large ribosomal subunit protein bL32c from Capsella bursa-pastoris (Shepherd's purse).